The following is a 1279-amino-acid chain: ATP-dependent helicase/nuclease subunit A (1279 aa).

A UvrD-like helicase ATP-binding domain is found at 4–499 (TKWTDEQRQA…VKLFKNFRSR (496 aa)). Position 25–32 (25–32 (AGAGAGKT)) interacts with ATP. A UvrD-like helicase C-terminal domain is found at 526–853 (EEALKVGASY…RIMSIHKSKG (328 aa)).

The protein belongs to the helicase family. AddA subfamily. As to quaternary structure, heterodimer of AddA and AddB/RexB. Mg(2+) serves as cofactor.

The catalysed reaction is Couples ATP hydrolysis with the unwinding of duplex DNA by translocating in the 3'-5' direction.. It carries out the reaction ATP + H2O = ADP + phosphate + H(+). Functionally, the heterodimer acts as both an ATP-dependent DNA helicase and an ATP-dependent, dual-direction single-stranded exonuclease. Recognizes the chi site generating a DNA molecule suitable for the initiation of homologous recombination. The AddA nuclease domain is required for chi fragment generation; this subunit has the helicase and 3' -&gt; 5' nuclease activities. This is ATP-dependent helicase/nuclease subunit A from Clostridium botulinum (strain Hall / ATCC 3502 / NCTC 13319 / Type A).